We begin with the raw amino-acid sequence, 321 residues long: 5,10-methylenetetrahydromethanopterin reductase (321 aa).

It belongs to the mer family.

The protein localises to the cytoplasm. It carries out the reaction 5-methyl-5,6,7,8-tetrahydromethanopterin + oxidized coenzyme F420-(gamma-L-Glu)(n) + H(+) = 5,10-methylenetetrahydromethanopterin + reduced coenzyme F420-(gamma-L-Glu)(n). It participates in one-carbon metabolism; methanogenesis from CO(2); methyl-coenzyme M from 5,10-methylene-5,6,7,8-tetrahydromethanopterin: step 1/2. Catalyzes the reversible reduction of methylene-H(4)MPT to methyl-H(4)MPT. The protein is 5,10-methylenetetrahydromethanopterin reductase of Methanothermobacter thermautotrophicus (strain ATCC 29096 / DSM 1053 / JCM 10044 / NBRC 100330 / Delta H) (Methanobacterium thermoautotrophicum).